The chain runs to 178 residues: dCTP deaminase, dUMP-forming (178 aa).

DCTP-binding positions include 96–101 (RSSLGR), Asp-113, 121–123 (TLE), Gln-142, Tyr-156, and Gln-163. Residue Glu-123 is the Proton donor/acceptor of the active site.

It belongs to the dCTP deaminase family. In terms of assembly, homotrimer.

The enzyme catalyses dCTP + 2 H2O = dUMP + NH4(+) + diphosphate. The protein operates within pyrimidine metabolism; dUMP biosynthesis; dUMP from dCTP: step 1/1. Bifunctional enzyme that catalyzes both the deamination of dCTP to dUTP and the hydrolysis of dUTP to dUMP without releasing the toxic dUTP intermediate. The sequence is that of dCTP deaminase, dUMP-forming from Acetivibrio thermocellus (strain ATCC 27405 / DSM 1237 / JCM 9322 / NBRC 103400 / NCIMB 10682 / NRRL B-4536 / VPI 7372) (Clostridium thermocellum).